We begin with the raw amino-acid sequence, 190 residues long: Movement protein (190 aa).

The protein belongs to the tombusvirus/aureusvirus movement protein p22 family.

Its subcellular location is the host membrane. Functionally, transports viral genome to neighboring plant cells directly through plasmosdesmata, without any budding. The movement protein allows efficient cell to cell propagation, by bypassing the host cell wall barrier. This is Movement protein from Cucumber necrosis virus (CNV).